Consider the following 468-residue polypeptide: 6-phospho-beta-galactosidase 2 (468 aa).

5 residues coordinate D-galactose 6-phosphate: glutamine 19, histidine 116, asparagine 159, glutamate 160, and asparagine 297. Glutamate 160 (proton donor) is an active-site residue. Glutamate 375 serves as the catalytic Nucleophile. D-galactose 6-phosphate-binding residues include serine 428, tryptophan 429, lysine 435, and tyrosine 437.

This sequence belongs to the glycosyl hydrolase 1 family.

It catalyses the reaction a 6-phospho-beta-D-galactoside + H2O = D-galactose 6-phosphate + an alcohol. The protein operates within carbohydrate metabolism; lactose degradation; D-galactose 6-phosphate and beta-D-glucose from lactose 6-phosphate: step 1/1. The polypeptide is 6-phospho-beta-galactosidase 2 (Streptococcus pneumoniae (strain ATCC BAA-255 / R6)).